The following is a 99-amino-acid chain: Beta-defensin 127 (99 aa).

The N-terminal stretch at 1-20 is a signal peptide; that stretch reads MGLFMIIAILLFQKPTVTEQ. 3 disulfides stabilise this stretch: C24/C53, C33/C47, and C37/C54. Positions 66 to 99 are excised as a propeptide; it reads ITKPSHPKPATLALTLQDYVTIIENFPSLKTQST.

This sequence belongs to the beta-defensin family.

The protein resides in the secreted. In terms of biological role, has antibacterial activity. This chain is Beta-defensin 127 (DEFB127), found in Pan troglodytes (Chimpanzee).